Consider the following 88-residue polypeptide: Exodeoxyribonuclease 7 small subunit (88 aa).

This sequence belongs to the XseB family. As to quaternary structure, heterooligomer composed of large and small subunits.

It localises to the cytoplasm. The catalysed reaction is Exonucleolytic cleavage in either 5'- to 3'- or 3'- to 5'-direction to yield nucleoside 5'-phosphates.. Bidirectionally degrades single-stranded DNA into large acid-insoluble oligonucleotides, which are then degraded further into small acid-soluble oligonucleotides. In Bordetella bronchiseptica (strain ATCC BAA-588 / NCTC 13252 / RB50) (Alcaligenes bronchisepticus), this protein is Exodeoxyribonuclease 7 small subunit.